The following is a 433-amino-acid chain: Tol-Pal system protein TolB (433 aa).

The N-terminal stretch at 1–21 (MRNLLRGMLVVICCMAGIAAA) is a signal peptide.

It belongs to the TolB family. In terms of assembly, the Tol-Pal system is composed of five core proteins: the inner membrane proteins TolA, TolQ and TolR, the periplasmic protein TolB and the outer membrane protein Pal. They form a network linking the inner and outer membranes and the peptidoglycan layer.

It is found in the periplasm. Part of the Tol-Pal system, which plays a role in outer membrane invagination during cell division and is important for maintaining outer membrane integrity. In Pseudomonas fluorescens (strain ATCC BAA-477 / NRRL B-23932 / Pf-5), this protein is Tol-Pal system protein TolB.